A 1177-amino-acid chain; its full sequence is Chromosome partition protein Smc (1177 aa).

34–41 is an ATP binding site; that stretch reads ANGSGKSN. Positions 167–506 form a coiled coil; sequence SGIAEYDSKK…IAAEAQREVR (340 aa). The SMC hinge domain occupies 521-627; sequence GIYGTLAELI…VIVNSMEEAR (107 aa). Residues 659–1012 are a coiled coil; that stretch reads LAVDTTKLRE…NEIEKEKKNV (354 aa).

It belongs to the SMC family. Homodimer.

It localises to the cytoplasm. Functionally, required for chromosome condensation and partitioning. Binds single-stranded but not double-stranded DNA. This Pyrococcus furiosus (strain ATCC 43587 / DSM 3638 / JCM 8422 / Vc1) protein is Chromosome partition protein Smc.